A 218-amino-acid polypeptide reads, in one-letter code: UPF0598 protein C8orf82 homolog (218 aa).

It belongs to the UPF0598 family.

This chain is UPF0598 protein C8orf82 homolog, found in Mus musculus (Mouse).